The chain runs to 59 residues: Large ribosomal subunit protein uL30 (59 aa).

Belongs to the universal ribosomal protein uL30 family. Part of the 50S ribosomal subunit.

The polypeptide is Large ribosomal subunit protein uL30 (Haemophilus ducreyi (strain 35000HP / ATCC 700724)).